The primary structure comprises 37 residues: Large ribosomal subunit protein bL36c (37 aa).

This sequence belongs to the bacterial ribosomal protein bL36 family.

The protein resides in the plastid. It is found in the chloroplast. The protein is Large ribosomal subunit protein bL36c of Populus alba (White poplar).